Consider the following 547-residue polypeptide: Glucose-6-phosphate isomerase (547 aa).

Glutamate 354 acts as the Proton donor in catalysis. Catalysis depends on residues histidine 385 and lysine 513.

Belongs to the GPI family.

The protein localises to the cytoplasm. The enzyme catalyses alpha-D-glucose 6-phosphate = beta-D-fructose 6-phosphate. Its pathway is carbohydrate biosynthesis; gluconeogenesis. The protein operates within carbohydrate degradation; glycolysis; D-glyceraldehyde 3-phosphate and glycerone phosphate from D-glucose: step 2/4. Its function is as follows. Catalyzes the reversible isomerization of glucose-6-phosphate to fructose-6-phosphate. The polypeptide is Glucose-6-phosphate isomerase (Erwinia tasmaniensis (strain DSM 17950 / CFBP 7177 / CIP 109463 / NCPPB 4357 / Et1/99)).